Here is a 335-residue protein sequence, read N- to C-terminus: UPF0324 membrane protein gbs1193 (335 aa).

The next 9 membrane-spanning stretches (helical) occupy residues 20 to 42 (SWLL…IGII), 57 to 79 (IAFT…LNLM), 84 to 106 (VGIS…AYVL), 116 to 138 (IATL…TAPV), 151 to 173 (SVIF…FIGL), 210 to 232 (GATI…LSIY), 253 to 275 (VLYF…SLRI), 285 to 304 (FFIV…SKLI), and 311 to 333 (ILLG…AILG).

It belongs to the UPF0324 family.

The protein localises to the cell membrane. This Streptococcus agalactiae serotype III (strain NEM316) protein is UPF0324 membrane protein gbs1193.